Here is an 835-residue protein sequence, read N- to C-terminus: Replication origin-binding protein (835 aa).

A Helicase ATP-binding domain is found at 54–215; sequence PGMSQTRPVT…SGLRGDENIH (162 aa). 67-74 serves as a coordination point for ATP; sequence APMGSGKT.

It belongs to the herpesviridae OriBP family. As to quaternary structure, homodimer. Interacts with the major DNA-binding protein. Interacts with the helicase/primase component 52 and the polymerase accessory protein.

The protein resides in the host nucleus. Functionally, functions as a docking protein to recruit essential components of the viral replication machinery to viral DNA origins. In the presence of the major DNA-binding protein, opens dsDNA leading to a conformational change in the origin that facilitates DNA unwinding and subsequent replication. This chain is Replication origin-binding protein, found in Homo sapiens (Human).